The following is a 397-amino-acid chain: Phosphoglycerate kinase (397 aa).

Residues Asp21–Asn23, Arg36, His59–Arg62, Arg114, and Arg147 each bind substrate. Residues Lys198, Glu320, and Gly346–Thr349 contribute to the ATP site.

Belongs to the phosphoglycerate kinase family. As to quaternary structure, monomer.

It localises to the cytoplasm. The enzyme catalyses (2R)-3-phosphoglycerate + ATP = (2R)-3-phospho-glyceroyl phosphate + ADP. It participates in carbohydrate degradation; glycolysis; pyruvate from D-glyceraldehyde 3-phosphate: step 2/5. This is Phosphoglycerate kinase from Neisseria gonorrhoeae (strain NCCP11945).